The following is a 672-amino-acid chain: UvrABC system protein B (672 aa).

One can recognise a Helicase ATP-binding domain in the interval 26 to 183 (EGLEDGLAHQ…RRLSELQYVR (158 aa)). Residue 39–46 (GVTGSGKT) participates in ATP binding. The Beta-hairpin motif lies at 92–115 (YYDYYQPEAYVPSSDTFIEKDASV). In terms of domain architecture, Helicase C-terminal spans 431 to 597 (QVDDLLSEIN…ALNKKVTDIL (167 aa)). Positions 601–623 (DGPVRSRTKGARGQRAAEPHPDY) are disordered. A UVR domain is found at 632–667 (EQQIQRLETQMYQHAQNLEFEQAAALRDEIHILREQ).

This sequence belongs to the UvrB family. In terms of assembly, forms a heterotetramer with UvrA during the search for lesions. Interacts with UvrC in an incision complex.

It is found in the cytoplasm. The UvrABC repair system catalyzes the recognition and processing of DNA lesions. A damage recognition complex composed of 2 UvrA and 2 UvrB subunits scans DNA for abnormalities. Upon binding of the UvrA(2)B(2) complex to a putative damaged site, the DNA wraps around one UvrB monomer. DNA wrap is dependent on ATP binding by UvrB and probably causes local melting of the DNA helix, facilitating insertion of UvrB beta-hairpin between the DNA strands. Then UvrB probes one DNA strand for the presence of a lesion. If a lesion is found the UvrA subunits dissociate and the UvrB-DNA preincision complex is formed. This complex is subsequently bound by UvrC and the second UvrB is released. If no lesion is found, the DNA wraps around the other UvrB subunit that will check the other stand for damage. The chain is UvrABC system protein B from Edwardsiella ictaluri (strain 93-146).